The sequence spans 92 residues: Small ribosomal subunit protein uS19 (92 aa).

It belongs to the universal ribosomal protein uS19 family.

In terms of biological role, protein S19 forms a complex with S13 that binds strongly to the 16S ribosomal RNA. This is Small ribosomal subunit protein uS19 from Parvibaculum lavamentivorans (strain DS-1 / DSM 13023 / NCIMB 13966).